A 368-amino-acid polypeptide reads, in one-letter code: MSGGACIAVRSLSRSWTDNAIRLIEADARRSADTHLLRYPLPAAWCTDVDVELYLKDETTHITGSLKHRLARSLFLYALCNGWINENTTVVEASSGSTAVSEAYFAALLGLPFIAVMPAATSASKIALIESQGGRCHFVQNSSQVYAEAERVAKETGGHYLDQFTNAERATDWRGNNNIAESIYVQMREEKHPTPEWIVVGAGTGGTSATIGRYIRYRRHATRLCVVDPENSAFFPAYSEGRYDIVMPTSSRIEGIGRPRVEPSFLPGVVDRMVAVPDAASIAAARHVSAVLGRRVGPSTGTNLWGAFGLLAEMVKQGRSGSVVTLLADSGDRYADTYFSDEWVSAQGLDPAGPAAALVEFERSCRWT.

Lys67 is subject to N6-(pyridoxal phosphate)lysine. Residues 203–207 and Ser299 each bind pyridoxal 5'-phosphate; that span reads GTGGT.

This sequence belongs to the cysteine synthase/cystathionine beta-synthase family. Cds1 subfamily. Pyridoxal 5'-phosphate is required as a cofactor.

It is found in the cytoplasm. It carries out the reaction L-cysteine + H2O = hydrogen sulfide + pyruvate + NH4(+) + H(+). Its function is as follows. A cysteine desulfhydrase that generates hydrogen sulfide, H(2)S. The H(2)S produced by this enzyme stimulates respiration in M.tuberculosis, mediated primarily via cytochrome bd with a lesser contribution from cytochrome bc1/aa3. H(2)S modulates the balance between respiration and glycolysis, and also contributes to redox homeostasis. Probably eliminates toxic levels of Cys (which can induce oxidative stress). The protein is L-cysteine desulfhydrase Cds1 of Mycobacterium tuberculosis (strain ATCC 25177 / H37Ra).